Here is a 419-residue protein sequence, read N- to C-terminus: Peroxisome biogenesis factor 10 (419 aa).

At 1–27 (MPPSEEIKLRAVSPRPDFKANYLEFAN) the chain is on the peroxisomal matrix side. A helical transmembrane segment spans residues 28-57 (APAIVRANQKDSYFETVLRDKLQNVIQIFK). A topological domain (cytoplasmic) is located at residue glycine 58. A helical membrane pass occupies residues 59-80 (QRFTHTHPEEIGVAAKALYLSL). Topologically, residues 81-108 (TTLLGTKTLGEEYVDLIYVSRDGKRIPR) are peroxisomal matrix. The helical transmembrane segment at 109 to 141 (YLARAGFIFAYAILPYFLTRLFRRLKSSSTPKD) threads the bilayer. The Cytoplasmic portion of the chain corresponds to 142–158 (EVTEEKINKELPISLRI). Residues 159 to 185 (EKYLSNMSYSKVLDTIMNLHIAVFYFS) form a helical membrane-spanning segment. Over 186-215 (GQFYNISKRFFSMRYAFGHKINKERTPNGN) the chain is Peroxisomal matrix. The chain crosses the membrane as a helical span at residues 216-235 (YELLGGLIVLQLVMKSLGGF). The Cytoplasmic segment spans residues 236–419 (KGLIGSFTGN…RTLGYFLVVF (184 aa)). 8 residues coordinate Zn(2+): cysteine 298, cysteine 301, cysteine 313, histidine 315, cysteine 318, cysteine 321, cysteine 334, and cysteine 347. Residues 298-360 (CMLCLSYMTN…FYIPTLNKIC (63 aa)) form an RING-type zinc finger.

It belongs to the pex2/pex10/pex12 family. Component of the peroxisomal translocation complex, composed of at least PEX3, PEX2, PEX10 and PEX12. Interacts with PEX19.

The protein localises to the peroxisome membrane. It catalyses the reaction S-ubiquitinyl-[E2 ubiquitin-conjugating enzyme]-L-cysteine + [acceptor protein]-L-lysine = [E2 ubiquitin-conjugating enzyme]-L-cysteine + N(6)-ubiquitinyl-[acceptor protein]-L-lysine.. It participates in protein modification; protein ubiquitination. With respect to regulation, the E3 ubiquitin-protein ligase activity is stimulated by PEX12. Functionally, E3 ubiquitin-protein ligase component of the peroxisomal translocation complex. The two types of peroxisomal matrix targeting signals, PTS1 and PTS2, are first recognized in the cytosol by their receptors PEX5 and PEX7, respectively, which then carry the cargo to the peroxisomal membrane. The peroxisomal targeting signal (PTS) receptor-cargo complexes interact with peroxisomal membrane protein (PMP) components of the docking complex. They have then additional downstream interactions with the translocation complex, leading to the transport of fully folded and oligomerized cargo into the peroxisome matrix. The peroxisomal translocation complex forms the retrotranslocation channel with each subunit contributing transmembrane segments that coassemble into an open channel that specifically allows the passage of PEX5 and PEX20 through the peroxisomal membrane. Specifically catalyzes monoubiquitination of PEX5 and/or PEX20 at 'Cys-6' and 'Cys-8', respectively, a modification that acts as a signal for PEX5 or PEX20 export from peroxisomes to the cytosol, thereby promoting PEX5 and PEX20 recycling. The protein is Peroxisome biogenesis factor 10 of Komagataella pastoris (Yeast).